The sequence spans 455 residues: GTPase Der (455 aa).

EngA-type G domains are found at residues 4 to 169 (PVVA…PPKD) and 178 to 353 (IQLS…EQHR). Residues 10–17 (GRPNVGKS), 57–61 (DTGGL), 120–123 (NKCE), 184–191 (GRPNVGKS), 231–235 (DTAGI), and 296–299 (NKWD) each bind GTP. The KH-like domain occupies 354 to 439 (RRVSTSVVNE…PVKLFWRGKQ (86 aa)).

The protein belongs to the TRAFAC class TrmE-Era-EngA-EngB-Septin-like GTPase superfamily. EngA (Der) GTPase family. In terms of assembly, associates with the 50S ribosomal subunit.

Its function is as follows. GTPase that plays an essential role in the late steps of ribosome biogenesis. The protein is GTPase Der of Synechococcus sp. (strain CC9311).